The following is a 1687-amino-acid chain: PH domain leucine-rich repeat-containing protein phosphatase 1 (1687 aa).

An N-acetylmethionine modification is found at M1. 2 disordered regions span residues 1–96 (MEPA…GGGA) and 230–406 (AAAP…AAPD). The segment covering 78–96 (APQPAAGGAAPVPAAGGGA) has biased composition (low complexity). S286 bears the Phosphoserine mark. A compositionally biased stretch (polar residues) spans 314–326 (DTESFSLSPSAES). S372 bears the Phosphoserine mark. The PH domain maps to 492 to 592 (RIQLSGMYNV…WLRQVSKVAS (101 aa)). LRR repeat units lie at residues 594 to 615 (RISSVDLSCCSLEHLPANLFYS), 617 to 638 (DLTHLNLKQNFLRQTPTLPAAR), 648 to 669 (KLKSLNLSNNHLGAFPSAVCSI), 671 to 692 (TLAELNVSCNALREVPAAVGDM), 694 to 715 (NLQTFLLDGNFLQSLPAELESM), 717 to 739 (QLSYLGLSFNEFTDIPEVLEKLT), 740 to 760 (AVDKLCMAGNCVETLRLQALR), 764 to 785 (HIKHVDLRLNILRKLMADEVDF), 788 to 809 (HVTQLDLRDNKLGDLDAMIFNN), 829 to 850 (FLKALYASSNELAQLDVYPVPN), 851 to 872 (YLSYMDVSRNCLESVPEWVCES), 874 to 895 (KLEVLDIGHNQICELPARLFCN), 897 to 918 (SLRKLLAGHNRLARLPERLERT), 919 to 940 (SVEVLDVQHNQITELPPNLLMK), 943 to 964 (SLRFLNASANKLETLPPATLSE), 969 to 989 (ILQELYLTNNCLTDKCVPLLT), 993 to 1014 (RLKILHMAYNRLQSFPASKMAK), 1017 to 1038 (ELEEIDISGNKLKAIPTTIMNC), 1040 to 1061 (RMHTVIAHSNCIEVFPEVMQLP), 1062 to 1083 (EVKCVDLSCNELSEITLPENLP), and 1085 to 1106 (KLQELDLTGNPRLALDHKSLEL). The region spanning 1131–1378 (SHGYTEASGV…DSISAVVVQL (248 aa)) is the PPM-type phosphatase domain. D1166, G1167, K1330, and D1369 together coordinate Mn(2+). Disordered stretches follow at residues 1414 to 1465 (DRPS…SSPA) and 1604 to 1687 (PGGY…DTPL). The segment covering 1424 to 1445 (SSSSGMASEISSELSTSEMSSE) has biased composition (low complexity). A compositionally biased stretch (pro residues) spans 1649–1669 (LPPPPQPPQPQPQPQPQPQPQ). Positions 1685–1687 (TPL) match the PDZ-binding motif.

Interacts with the nucleotide free form of K-Ras (KRAS) via its LRR repeats. Interacts with AKT2, AKT3 and PRKCB. Interacts with WDR48 and USP12. It depends on Mn(2+) as a cofactor. Isoforms 1 and 2 are expressed in the retina.

Its subcellular location is the cytoplasm. The protein localises to the membrane. It localises to the nucleus. It catalyses the reaction O-phospho-L-seryl-[protein] + H2O = L-seryl-[protein] + phosphate. The enzyme catalyses O-phospho-L-threonyl-[protein] + H2O = L-threonyl-[protein] + phosphate. With respect to regulation, insensitive to okadaic acid. Deubiquitination by WDR48-USP12 complex positively regulates PHLPP1 stability. Its function is as follows. Protein phosphatase involved in regulation of Akt and PKC signaling. Mediates dephosphorylation in the C-terminal domain hydrophobic motif of members of the AGC Ser/Thr protein kinase family; specifically acts on 'Ser-473' of AKT2 and AKT3, 'Ser-660' of PRKCB and 'Ser-657' of PRKCA. Isoform 2 seems to have a major role in regulating Akt signaling in hippocampal neurons. Akt regulates the balance between cell survival and apoptosis through a cascade that primarily alters the function of transcription factors that regulate pro- and antiapoptotic genes. Dephosphorylation of 'Ser-473' of Akt triggers apoptosis and suppression of tumor growth. Dephosphorylation of PRKCA and PRKCB leads to their destabilization and degradation. Dephosphorylates STK4 on 'Thr-387' leading to STK4 activation and apoptosis. Dephosphorylates RPS6KB1 and is involved in regulation of cap-dependent translation. Inhibits cancer cell proliferation and may act as a tumor suppressor. Dephosphorylates RAF1 inhibiting its kinase activity. May act as a negative regulator of K-Ras signaling in membrane rafts. Involved in the hippocampus-dependent long-term memory formation. Involved in circadian control by regulating the consolidation of circadian periodicity after resetting. Involved in development and function of regulatory T-cells. The polypeptide is PH domain leucine-rich repeat-containing protein phosphatase 1 (Phlpp1) (Mus musculus (Mouse)).